The primary structure comprises 214 residues: Ras-related protein Rab2BV (214 aa).

19–26 (GDSGVGKS) contributes to the GTP binding site. The Effector region signature appears at 41–49 (SKSTIGVEF). GTP-binding positions include 67–71 (DTAGQ) and 125–128 (NKSD). 2 S-geranylgeranyl cysteine lipidation sites follow: Cys211 and Cys212.

The protein belongs to the small GTPase superfamily. Rab family.

It is found in the cell membrane. This Beta vulgaris (Sugar beet) protein is Ras-related protein Rab2BV (RAB2BV).